A 204-amino-acid polypeptide reads, in one-letter code: uncharacterized protein (204 aa).

The protein resides in the cytoplasm. It localises to the nucleus. This is an uncharacterized protein from Schizosaccharomyces pombe (strain 972 / ATCC 24843) (Fission yeast).